Here is a 171-residue protein sequence, read N- to C-terminus: Translationally-controlled tumor protein homolog (171 aa).

The region spanning 1–171 is the TCTP domain; sequence MIIYRDCISQ…FKDGLEMEKC (171 aa).

Belongs to the TCTP family. As to expression, expressed by the venom gland.

It localises to the secreted. Its function is as follows. Venom protein that causes edema, enhances vascular permeability and is likely related to the inflammatory activity of the venom. The sequence is that of Translationally-controlled tumor protein homolog from Micrurus fulvius (Eastern coral snake).